A 246-amino-acid chain; its full sequence is tRNA pseudouridine synthase A (246 aa).

The active-site Nucleophile is the aspartate 54. Tyrosine 112 contributes to the substrate binding site.

This sequence belongs to the tRNA pseudouridine synthase TruA family. Homodimer.

It catalyses the reaction uridine(38/39/40) in tRNA = pseudouridine(38/39/40) in tRNA. In terms of biological role, formation of pseudouridine at positions 38, 39 and 40 in the anticodon stem and loop of transfer RNAs. The protein is tRNA pseudouridine synthase A of Moorella thermoacetica (strain ATCC 39073 / JCM 9320).